Reading from the N-terminus, the 525-residue chain is GMP synthase [glutamine-hydrolyzing] (525 aa).

Residues 9-207 (RILILDFGSQ…VLGICGCEAL (199 aa)) form the Glutamine amidotransferase type-1 domain. The active-site Nucleophile is Cys86. Catalysis depends on residues His181 and Glu183. A GMPS ATP-PPase domain is found at 208 to 400 (WTSATIIEDA…LGLPYDMLYR (193 aa)). Position 235 to 241 (235 to 241 (SGGVDSS)) interacts with ATP.

In terms of assembly, homodimer.

It catalyses the reaction XMP + L-glutamine + ATP + H2O = GMP + L-glutamate + AMP + diphosphate + 2 H(+). It participates in purine metabolism; GMP biosynthesis; GMP from XMP (L-Gln route): step 1/1. Functionally, catalyzes the synthesis of GMP from XMP. This chain is GMP synthase [glutamine-hydrolyzing], found in Yersinia pseudotuberculosis serotype IB (strain PB1/+).